Here is an 878-residue protein sequence, read N- to C-terminus: Alanine--tRNA ligase (878 aa).

Residues H567, H571, C668, and H672 each coordinate Zn(2+).

This sequence belongs to the class-II aminoacyl-tRNA synthetase family. Zn(2+) serves as cofactor.

The protein localises to the cytoplasm. The enzyme catalyses tRNA(Ala) + L-alanine + ATP = L-alanyl-tRNA(Ala) + AMP + diphosphate. Catalyzes the attachment of alanine to tRNA(Ala) in a two-step reaction: alanine is first activated by ATP to form Ala-AMP and then transferred to the acceptor end of tRNA(Ala). Also edits incorrectly charged Ser-tRNA(Ala) and Gly-tRNA(Ala) via its editing domain. The chain is Alanine--tRNA ligase from Magnetococcus marinus (strain ATCC BAA-1437 / JCM 17883 / MC-1).